Reading from the N-terminus, the 123-residue chain is Histone H2B (123 aa).

A disordered region spans residues 1-31 (MPPKVASKGAKKAASKAKAARSGEKKKKRRR). Residues 9–31 (GAKKAASKAKAARSGEKKKKRRR) are compositionally biased toward basic residues. The O-linked (GlcNAc) serine glycan is linked to serine 110. A Glycyl lysine isopeptide (Lys-Gly) (interchain with G-Cter in ubiquitin) cross-link involves residue lysine 118.

Belongs to the histone H2B family. In terms of assembly, the nucleosome is a histone octamer containing two molecules each of H2A, H2B, H3 and H4 assembled in one H3-H4 heterotetramer and two H2A-H2B heterodimers. The octamer wraps approximately 147 bp of DNA. Monoubiquitination of Lys-118 gives a specific tag for epigenetic transcriptional activation and is also prerequisite for histone H3 'Lys-4' and 'Lys-79' methylation. Post-translationally, glcNAcylation at Ser-110 promotes monoubiquitination of Lys-118. It fluctuates in response to extracellular glucose, and associates with transcribed genes.

It localises to the nucleus. Its subcellular location is the chromosome. Its function is as follows. Core component of nucleosome. Nucleosomes wrap and compact DNA into chromatin, limiting DNA accessibility to the cellular machineries which require DNA as a template. Histones thereby play a central role in transcription regulation, DNA repair, DNA replication and chromosomal stability. DNA accessibility is regulated via a complex set of post-translational modifications of histones, also called histone code, and nucleosome remodeling. The sequence is that of Histone H2B from Platynereis dumerilii (Dumeril's clam worm).